A 295-amino-acid chain; its full sequence is Pyridoxal 5'-phosphate synthase subunit PdxS (295 aa).

Aspartate 25 lines the D-ribose 5-phosphate pocket. The active-site Schiff-base intermediate with D-ribose 5-phosphate is the lysine 82. D-ribose 5-phosphate is bound at residue glycine 154. Arginine 166 contacts D-glyceraldehyde 3-phosphate. Residues glycine 215 and 236–237 each bind D-ribose 5-phosphate; that span reads GS.

It belongs to the PdxS/SNZ family. As to quaternary structure, in the presence of PdxT, forms a dodecamer of heterodimers.

The enzyme catalyses aldehydo-D-ribose 5-phosphate + D-glyceraldehyde 3-phosphate + L-glutamine = pyridoxal 5'-phosphate + L-glutamate + phosphate + 3 H2O + H(+). It participates in cofactor biosynthesis; pyridoxal 5'-phosphate biosynthesis. Functionally, catalyzes the formation of pyridoxal 5'-phosphate from ribose 5-phosphate (RBP), glyceraldehyde 3-phosphate (G3P) and ammonia. The ammonia is provided by the PdxT subunit. Can also use ribulose 5-phosphate and dihydroxyacetone phosphate as substrates, resulting from enzyme-catalyzed isomerization of RBP and G3P, respectively. The polypeptide is Pyridoxal 5'-phosphate synthase subunit PdxS (Shouchella clausii (strain KSM-K16) (Alkalihalobacillus clausii)).